Reading from the N-terminus, the 235-residue chain is Ribosomal RNA small subunit methyltransferase G (235 aa).

S-adenosyl-L-methionine-binding positions include Gly-74, Phe-79, Glu-97 to Thr-99, Ala-125 to Glu-126, and Arg-144.

It belongs to the methyltransferase superfamily. RNA methyltransferase RsmG family.

The protein resides in the cytoplasm. Specifically methylates the N7 position of a guanine in 16S rRNA. The sequence is that of Ribosomal RNA small subunit methyltransferase G from Dehalococcoides mccartyi (strain ATCC BAA-2100 / JCM 16839 / KCTC 5957 / BAV1).